The following is a 154-amino-acid chain: Small ribosomal subunit protein uS11c (154 aa).

The protein belongs to the universal ribosomal protein uS11 family. In terms of assembly, part of the 30S ribosomal subunit.

It is found in the plastid. The sequence is that of Small ribosomal subunit protein uS11c from Helicosporidium sp. subsp. Simulium jonesii (Green alga).